Reading from the N-terminus, the 214-residue chain is Adenylate kinase (214 aa).

10-15 (GAGKGT) serves as a coordination point for ATP. The interval 30 to 59 (STGDMFRAAIKAGTELGKQAKALMDEGKLV) is NMP. AMP-binding positions include Thr-31, Arg-36, 57–59 (KLV), 85–88 (GFPR), and Gln-92. Residues 122-159 (GRRVHQTSGRSYHIVYNPPKVEGKDDVTGEDLIIRADD) are LID. ATP-binding positions include Arg-123 and 132 to 133 (SY). Positions 156 and 167 each coordinate AMP. An ATP-binding site is contributed by Gln-200.

This sequence belongs to the adenylate kinase family. Monomer.

The protein localises to the cytoplasm. The enzyme catalyses AMP + ATP = 2 ADP. It participates in purine metabolism; AMP biosynthesis via salvage pathway; AMP from ADP: step 1/1. Its function is as follows. Catalyzes the reversible transfer of the terminal phosphate group between ATP and AMP. Plays an important role in cellular energy homeostasis and in adenine nucleotide metabolism. The protein is Adenylate kinase of Haemophilus influenzae (strain PittEE).